The chain runs to 258 residues: UPF0246 protein CGSHiEE_07045 (258 aa).

This sequence belongs to the UPF0246 family.

This Haemophilus influenzae (strain PittEE) protein is UPF0246 protein CGSHiEE_07045.